Consider the following 298-residue polypeptide: tRNA pseudouridine synthase B (298 aa).

The active-site Nucleophile is D42.

Belongs to the pseudouridine synthase TruB family. Type 1 subfamily.

It catalyses the reaction uridine(55) in tRNA = pseudouridine(55) in tRNA. Its function is as follows. Responsible for synthesis of pseudouridine from uracil-55 in the psi GC loop of transfer RNAs. In Mycobacterium tuberculosis (strain CDC 1551 / Oshkosh), this protein is tRNA pseudouridine synthase B.